Here is a 263-residue protein sequence, read N- to C-terminus: tRNA pseudouridine synthase A (263 aa).

Residue D51 is the Nucleophile of the active site. Y109 serves as a coordination point for substrate.

This sequence belongs to the tRNA pseudouridine synthase TruA family. As to quaternary structure, homodimer.

It catalyses the reaction uridine(38/39/40) in tRNA = pseudouridine(38/39/40) in tRNA. Formation of pseudouridine at positions 38, 39 and 40 in the anticodon stem and loop of transfer RNAs. The sequence is that of tRNA pseudouridine synthase A from Pseudoalteromonas atlantica (strain T6c / ATCC BAA-1087).